A 392-amino-acid polypeptide reads, in one-letter code: Acetyl-CoA acetyltransferase (392 aa).

Residue C87 is the Acyl-thioester intermediate of the active site. Residues H348 and C378 each act as proton acceptor in the active site.

Belongs to the thiolase-like superfamily. Thiolase family.

Its subcellular location is the cytoplasm. It catalyses the reaction 2 acetyl-CoA = acetoacetyl-CoA + CoA. Its pathway is metabolic intermediate biosynthesis; (R)-mevalonate biosynthesis; (R)-mevalonate from acetyl-CoA: step 1/3. Functionally, involved in the production of polyhydroxyalkonic acids (PHAs), composed primarily of 3-hydroxybutyric acid (3HB) and 3-hydroxyvaleric acid (3HV). This chain is Acetyl-CoA acetyltransferase (phaA), found in Chromobacterium violaceum (strain ATCC 12472 / DSM 30191 / JCM 1249 / CCUG 213 / NBRC 12614 / NCIMB 9131 / NCTC 9757 / MK).